The following is a 398-amino-acid chain: MEYSYRTKINVLFIVLILFVFAALGTAINAPRRKLTKKYRGPCMAVNSIDKCWRCDPFWAEDRQKMADCALGFGINAMGGKYGPYYIVTDNSDDDVVDPKPGTLRFGVIQKGPLWITFARSMRIRLTRELIVSSNKTIDGRGKYVHIANGAGIKIQSASNVIISNLRIHNIVPTAGGLLRESDDHLGLRGADEGDAISIFNSHDIWIDHISMSRATDGLIDAVAGSTNITISNCHFTDHEKVMLFGANDHAEEDRGMKITLAYNHFGKRLDQRMPRCRFGFFHLVNNDYTHWERYAIGGSSGATIISQGNRFIAEDKLLVKEVTYREKSTSSVEEWMKWTWITDGDDFENGATFTPSGDQNLLSKIDHLNLIQPEPSSKVGLLTKFSGALSCKIRRPC.

A signal peptide spans 1–27 (MEYSYRTKINVLFIVLILFVFAALGTA). Asn135 is a glycosylation site (N-linked (GlcNAc...) asparagine). Ca(2+) contacts are provided by Asp192, Asp217, and Asp221. N-linked (GlcNAc...) asparagine glycosylation occurs at Asn228. Arg273 is a catalytic residue.

The protein belongs to the polysaccharide lyase 1 family. Ca(2+) is required as a cofactor. As to expression, expressed in anthers and pollen.

The catalysed reaction is Eliminative cleavage of (1-&gt;4)-alpha-D-galacturonan to give oligosaccharides with 4-deoxy-alpha-D-galact-4-enuronosyl groups at their non-reducing ends.. The protein operates within glycan metabolism; pectin degradation; 2-dehydro-3-deoxy-D-gluconate from pectin: step 2/5. Might be needed during pollen development and tube growth. This Solanum lycopersicum (Tomato) protein is Probable pectate lyase P56 (LAT56).